The sequence spans 822 residues: BDNF/NT-3 growth factors receptor (822 aa).

The signal sequence occupies residues 1 to 31 (MSSWIRWHGPAMARLWGFCWLVVGFWRAAFA). Intrachain disulfides connect cysteine 32/cysteine 38 and cysteine 36/cysteine 45. In terms of domain architecture, LRRNT spans 32-61 (CPTSCKCSASRIWCSDPSPGIVAFPRLEPN). The Extracellular segment spans residues 32–430 (CPTSCKCSAS…DVTDKTGREH (399 aa)). Asparagine 67, asparagine 95, and asparagine 121 each carry an N-linked (GlcNAc...) asparagine glycan. 2 LRR repeats span residues 92–113 (GLRNLTIVDSGLKFVAHKAFLK) and 116–137 (NLQHINFTRNKLTSLSRKHFRH). In terms of domain architecture, LRRCT spans 148 to 196 (NPFTCSCDIMWIKTLQEAKSSPDTQDLYCLNESSKNIPLANLQIPNCGL). Cystine bridges form between cysteine 152/cysteine 176 and cysteine 154/cysteine 194. N-linked (GlcNAc...) asparagine glycosylation is found at asparagine 178, asparagine 205, asparagine 241, asparagine 254, asparagine 280, asparagine 325, asparagine 338, and asparagine 412. Ig-like C2-type domains lie at 197 to 282 (PSAN…VNLT) and 295 to 365 (PTSD…IAKN). A disulfide bridge links cysteine 218 with cysteine 266. A disulfide bond links cysteine 302 and cysteine 345. A helical transmembrane segment spans residues 431–454 (LSVYAVVVIASVVGFCLLVMLFLL). The interaction with MAPK8IP3/JIP3 stretch occupies residues 455-466 (KLARHSKFGMKG). The Cytoplasmic portion of the chain corresponds to 455–822 (KLARHSKFGM…ASPVYLDILG (368 aa)). The disordered stretch occupies residues 475 to 498 (DDSASPLHHISNGSNTPSSSEGGP). The segment covering 485–495 (SNGSNTPSSSE) has biased composition (polar residues). The residue at position 516 (tyrosine 516) is a Phosphotyrosine; by autocatalysis. In terms of domain architecture, Protein kinase spans 538–807 (IVLKRELGEG…KNIKGIHTLL (270 aa)). ATP-binding positions include 544–552 (LGEGAFGKV) and lysine 572. Residue aspartate 676 is the Proton acceptor of the active site. Phosphotyrosine; by autocatalysis is present on residues tyrosine 702, tyrosine 706, tyrosine 707, and tyrosine 817.

The protein belongs to the protein kinase superfamily. Tyr protein kinase family. Insulin receptor subfamily. As to quaternary structure, exists in a dynamic equilibrium between monomeric (low affinity) and dimeric (high affinity) structures. Interacts (phosphorylated upon activation by BDNF) with SHC1; mediates SHC1 phosphorylation and activation. Interacts (phosphorylated upon activation by BDNF) with PLCG1 and/or PLCG2; mediates PLCG1 phosphorylation and activation. Interacts with SH2B1 and SH2B2. Interacts with NGFR; may regulate the ligand specificity of the receptor. Interacts with SORCS2; this interaction is important for normal targeting to post-synaptic densities in response to high-frequency stimulation. Interacts (phosphorylated upon ligand-binding) with SH2D1A; regulates NTRK2. Interacts with SQSTM1 and KIDINS220. Interacts (phosphorylated upon ligand-binding) with FRS2; activates the MAPK signaling pathway. Interacts with APPL1. Interacts with MAPK8IP3/JIP3 and KLC1; interaction with KLC1 is mediated by MAPK8IP3/JIP3. Interacts with SORL1; this interaction facilitates NTRK2 trafficking between synaptic plasma membranes, postsynaptic densities and cell soma, hence positively regulates BDNF signaling. Interacts with SLITRK2. Post-translationally, phosphorylated. Undergoes ligand-mediated autophosphorylation that is required for interaction with SHC1 and PLCG1 and other downstream effectors. Isoform TrkB-T-Shc is not phosphorylated. In terms of processing, ubiquitinated. Undergoes polyubiquitination upon activation; regulated by NGFR. Ubiquitination regulates the internalization of the receptor. As to expression, isoform TrkB is expressed in the central and peripheral nervous system. In the central nervous system (CNS), expression is observed in the cerebral cortex, hippocampus, thalamus, choroid plexus, granular layer of the cerebellum, brain stem, and spinal cord. In the peripheral nervous system, it is expressed in many cranial ganglia, the ophthalmic nerve, the vestibular system, multiple facial structures, the submaxillary glands, and dorsal root ganglia. Isoform TrkB-T1 is mainly expressed in the brain but also detected in other tissues including pancreas, kidney and heart. Isoform TrkB-T-Shc is predominantly expressed in the brain.

Its subcellular location is the cell membrane. It is found in the endosome membrane. The protein localises to the early endosome membrane. It localises to the cell projection. The protein resides in the axon. Its subcellular location is the dendrite. It is found in the cytoplasm. The protein localises to the perinuclear region. It localises to the postsynaptic density. The catalysed reaction is L-tyrosyl-[protein] + ATP = O-phospho-L-tyrosyl-[protein] + ADP + H(+). The neuronal activity and the influx of calcium positively regulate the kinase activity and the internalization of the receptor which are both important for active signaling. Regulated by NGFR that may control the internalization of the receptor. NGFR may also stimulate the activation by BDNF compared to NTF3 and NTF4. SH2D1A inhibits the autophosphorylation of the receptor, and alters the recruitment and activation of downstream effectors and signaling cascades. The formation of active receptors dimers able to fully transduce the ligand-mediated signal, may be negatively regulated by the formation of inactive heterodimers with the non-catalytic isoforms. Receptor tyrosine kinase involved in the development and the maturation of the central and the peripheral nervous systems through regulation of neuron survival, proliferation, migration, differentiation, and synapse formation and plasticity. Receptor for BDNF/brain-derived neurotrophic factor and NTF4/neurotrophin-4. Alternatively can also bind NTF3/neurotrophin-3 which is less efficient in activating the receptor but regulates neuron survival through NTRK2. Upon ligand-binding, undergoes homodimerization, autophosphorylation and activation. Recruits, phosphorylates and/or activates several downstream effectors including SHC1, FRS2, SH2B1, SH2B2 and PLCG1 that regulate distinct overlapping signaling cascades. Through SHC1, FRS2, SH2B1, SH2B2 activates the GRB2-Ras-MAPK cascade that regulates for instance neuronal differentiation including neurite outgrowth. Through the same effectors controls the Ras-PI3 kinase-AKT1 signaling cascade that mainly regulates growth and survival. Through PLCG1 and the downstream protein kinase C-regulated pathways controls synaptic plasticity. Thereby, plays a role in learning and memory by regulating both short term synaptic function and long-term potentiation. PLCG1 also leads to NF-Kappa-B activation and the transcription of genes involved in cell survival. Hence, it is able to suppress anoikis, the apoptosis resulting from loss of cell-matrix interactions. May also play a role in neutrophin-dependent calcium signaling in glial cells and mediate communication between neurons and glia. The protein is BDNF/NT-3 growth factors receptor (NTRK2) of Homo sapiens (Human).